A 167-amino-acid chain; its full sequence is Plastocyanin major isoform, chloroplastic (167 aa).

A chloroplast-targeting transit peptide spans 1 to 52 (MASVTSATVAIPSFTGLKASTIKSSATVRIQTAAVASPKLTVKSSLKNFGVA). A thylakoid-targeting transit peptide spans 53–68 (AVAAAASIALAGNAMA). The region spanning 69–167 (IEVLLGGGDG…AGMVGKVTVN (99 aa)) is the Plastocyanin-like domain. 4 residues coordinate Cu cation: His-105, Cys-152, His-155, and Met-160.

It belongs to the plastocyanin family. Cu(2+) is required as a cofactor.

Its subcellular location is the plastid. It is found in the chloroplast thylakoid membrane. Functionally, participates in electron transfer between P700 and the cytochrome b6-f complex in photosystem I. Seems to be the major plastocyanin in Arabidopsis. This Arabidopsis thaliana (Mouse-ear cress) protein is Plastocyanin major isoform, chloroplastic (DRT112).